The sequence spans 116 residues: MKFLIAFAVLALVACINANPYGSNRGYEGGRVAYVQEVGYGGGSYGNQGYGNHGYGNRGYAQPLYSRSSNPSASAAAAAASAGIRPGRYEQAAVIGYDLDASYNGHSRGGYGRGGY.

An N-terminal signal peptide occupies residues 1–18 (MKFLIAFAVLALVACINA).

Belongs to the chorion protein S15/S18 family.

The protein resides in the secreted. Chorion membrane (egg shell) protein; plays a role in protecting the egg from the environment. In Drosophila virilis (Fruit fly), this protein is Chorion protein S15 (Cp15).